The primary structure comprises 660 residues: Transcription activator of gluconeogenesis CHGG_09150 (660 aa).

Over residues 1-12 the composition is skewed to acidic residues; that stretch reads MSDSENEYDETD. The interval 1 to 52 is disordered; sequence MSDSENEYDETDQLVKEEDEKMSDQRLTSEGADTSAEPKKKYDPKDPLRPRR. 2 stretches are compositionally biased toward basic and acidic residues: residues 13 to 24 and 36 to 49; these read QLVKEEDEKMSD and AEPK…DPLR. Residues 59–87 constitute a DNA-binding region (zn(2)-C6 fungal-type); that stretch reads CFACQRAHLTCGDERPCQRCIKRNLMESC. Disordered regions lie at residues 98-144, 170-191, and 319-368; these read LHDA…TFFS, FANQ…QISG, and PTSI…RQSN. Over residues 129–144 the composition is skewed to polar residues; sequence SIQTSEASSNQGTFFS. A compositionally biased stretch (low complexity) spans 173–184; sequence QQSPTSPSFQTS. Polar residues-rich tracts occupy residues 320–332 and 344–368; these read TSIQ…TNSP and TMAT…RQSN. Residues 455–526 enclose the PAS domain; it reads SLLEYEEFMH…NSKARVGLAT (72 aa). Positions 587-613 are disordered; it reads APDKDDGTGESSTDGQLPQKDPRNSIL.

The protein belongs to the ERT1/acuK family.

The protein resides in the nucleus. Its function is as follows. Transcription factor which regulates nonfermentable carbon utilization. Activator of gluconeogenetic genes. This Chaetomium globosum (strain ATCC 6205 / CBS 148.51 / DSM 1962 / NBRC 6347 / NRRL 1970) (Soil fungus) protein is Transcription activator of gluconeogenesis CHGG_09150.